We begin with the raw amino-acid sequence, 254 residues long: 3-deoxy-manno-octulosonate cytidylyltransferase (254 aa).

This sequence belongs to the KdsB family.

The protein resides in the cytoplasm. The catalysed reaction is 3-deoxy-alpha-D-manno-oct-2-ulosonate + CTP = CMP-3-deoxy-beta-D-manno-octulosonate + diphosphate. The protein operates within nucleotide-sugar biosynthesis; CMP-3-deoxy-D-manno-octulosonate biosynthesis; CMP-3-deoxy-D-manno-octulosonate from 3-deoxy-D-manno-octulosonate and CTP: step 1/1. It functions in the pathway bacterial outer membrane biogenesis; lipopolysaccharide biosynthesis. Activates KDO (a required 8-carbon sugar) for incorporation into bacterial lipopolysaccharide in Gram-negative bacteria. The polypeptide is 3-deoxy-manno-octulosonate cytidylyltransferase (Pseudomonas entomophila (strain L48)).